A 229-amino-acid polypeptide reads, in one-letter code: MAGSTGGPLIAPSILAADFARLADEAAAVNGADWLHVDVMDGHFVPNLTIGLPVVESLLAVTDIPMDCHLMIDNPDRWAPPYAEAGAYNVTFHAEATDNPVGVARDIRAAGAKAGISVKPGTPLEPYLDILPHFDTLLVMSVEPGFGGQRFIPEVLSKVRAVRKMVDAGELTILVEIDGGINDDTIEQAAEAGVDCFVAGSAVYGADDPAAAVAALRRQAGAASLHLSL.

Ser-13 is a substrate binding site. A divalent metal cation is bound by residues His-36, Asp-38, and His-69. The Proton acceptor role is filled by Asp-38. Substrate is bound by residues His-69, 145–148, 178–180, and 200–201; these read GFGG, DGG, and GS. Asp-178 is an a divalent metal cation binding site. Catalysis depends on Asp-178, which acts as the Proton donor.

This sequence belongs to the ribulose-phosphate 3-epimerase family. The cofactor is a divalent metal cation.

It catalyses the reaction D-ribulose 5-phosphate = D-xylulose 5-phosphate. Its pathway is carbohydrate degradation. In terms of biological role, catalyzes the reversible epimerization of D-ribulose 5-phosphate to D-xylulose 5-phosphate. This is Ribulose-phosphate 3-epimerase from Mycobacterium bovis (strain ATCC BAA-935 / AF2122/97).